The chain runs to 221 residues: 3-isopropylmalate dehydratase small subunit (221 aa).

It belongs to the LeuD family. LeuD type 1 subfamily. As to quaternary structure, heterodimer of LeuC and LeuD.

The enzyme catalyses (2R,3S)-3-isopropylmalate = (2S)-2-isopropylmalate. Its pathway is amino-acid biosynthesis; L-leucine biosynthesis; L-leucine from 3-methyl-2-oxobutanoate: step 2/4. Functionally, catalyzes the isomerization between 2-isopropylmalate and 3-isopropylmalate, via the formation of 2-isopropylmaleate. The protein is 3-isopropylmalate dehydratase small subunit of Nitrosomonas europaea (strain ATCC 19718 / CIP 103999 / KCTC 2705 / NBRC 14298).